Consider the following 158-residue polypeptide: Biotin carboxyl carrier protein of acetyl-CoA carboxylase (158 aa).

A Biotinyl-binding domain is found at Y81–E157. K123 is modified (N6-biotinyllysine).

The protein resides in the plastid. Its subcellular location is the chloroplast. Its pathway is lipid metabolism; fatty acid biosynthesis. In terms of biological role, this protein is a component of the acetyl coenzyme A carboxylase complex; first, biotin carboxylase catalyzes the carboxylation of the carrier protein and then the transcarboxylase transfers the carboxyl group to form malonyl-CoA. In Pyropia yezoensis (Susabi-nori), this protein is Biotin carboxyl carrier protein of acetyl-CoA carboxylase (accB).